The primary structure comprises 786 residues: Elastin (786 aa).

Positions 1–26 (MAGLTAAAPRPGVLLLLLSILHPSRP) are cleaved as a signal peptide. Position 34 is a hydroxyproline (proline 34). Hydroxyproline; partial occurs at positions 65, 67, and 88. Lysine 104 and lysine 107 each carry allysine. Proline 116 is modified (4-hydroxyproline; partial). A hydroxyproline; partial mark is found at proline 156, proline 167, proline 170, and proline 177. Proline 190 is modified (4-hydroxyproline; partial). Residues lysine 241, lysine 261, and lysine 265 each carry the allysine modification. 4-hydroxyproline; partial occurs at positions 283 and 286. Proline 290 carries the hydroxyproline; partial modification. 2 positions are modified to allysine: lysine 312 and lysine 315. A 4-hydroxyproline; partial mark is found at proline 327, proline 342, and proline 347. Hydroxyproline; partial is present on residues proline 352 and proline 355. Proline 360 carries the 4-hydroxyproline; partial modification. Allysine is present on residues lysine 375, lysine 379, and lysine 382. Proline 415 carries the 4-hydroxyproline; partial modification. Proline 421 is modified (hydroxyproline; partial). A 4-hydroxyproline; partial modification is found at proline 427. An allysine mark is found at lysine 448 and lysine 451. The residue at position 465 (proline 465) is a Hydroxyproline; partial. Residue proline 481 is modified to 4-hydroxyproline; partial. Lysine 492 and lysine 496 each carry allysine. Hydroxyproline; partial occurs at positions 522 and 550. 3 positions are modified to allysine: lysine 558, lysine 562, and lysine 566. Proline 580 carries the 4-hydroxyproline; partial modification. Proline 589 and proline 598 each carry 4-hydroxyproline. Proline 607 carries the post-translational modification 4-hydroxyproline; partial. Residues 615–645 (EGVRRSLSPELREGDPSSSQHLPSTPSSPRV) are disordered. Over residues 630 to 645 (PSSSQHLPSTPSSPRV) the composition is skewed to low complexity. At proline 646 the chain carries Hydroxyproline; partial. Lysine 653 and lysine 656 each carry allysine. 4-hydroxyproline; partial is present on proline 677. Residues lysine 693, lysine 697, lysine 735, and lysine 738 each carry the allysine modification. Hydroxyproline; partial occurs at positions 769 and 772. Cysteine 776 and cysteine 781 form a disulfide bridge.

The protein belongs to the elastin family. In terms of assembly, the polymeric elastin chains are cross-linked together into an extensible 3D network. Forms a ternary complex with BGN and MFAP2. Interacts with MFAP2 via divalent cations (calcium &gt; magnesium &gt; manganese) in a dose-dependent and saturating manner. Interacts with FBLN5. Interacts with FBN1. Forms a ternary complex with FBN1 and FBLN2 or FBLN5. Interacts with MFAP4 in a Ca (2+)-dependent manner; this interaction promotes ELN self-assembly. Interacts with EFEMP2 with moderate affinity. Elastin is formed through the cross-linking of its soluble precursor tropoelastin. Cross-linking is initiated through the action of lysyl oxidase on exposed lysines to form allysine. Subsequent spontaneous condensation reactions with other allysine or unmodified lysine residues result in various bi-, tri-, and tetrafunctional cross-links. The most abundant cross-links in mature elastin fibers are lysinonorleucine, allysine aldol, desmosine, and isodesmosine. Post-translationally, hydroxylation on proline residues within the sequence motif, GXPG, is most likely 4-hydroxy as this fits the requirement for 4-hydroxylation in vertebrates. As to expression, expressed within the outer myometrial smooth muscle and throughout the arteriolar tree of uterus (at protein level). Also expressed in the large arteries, lung and skin.

It localises to the secreted. Its subcellular location is the extracellular space. The protein localises to the extracellular matrix. In terms of biological role, major structural protein of tissues such as aorta and nuchal ligament, which must expand rapidly and recover completely. Molecular determinant of the late arterial morphogenesis, stabilizing arterial structure by regulating proliferation and organization of vascular smooth muscle. The sequence is that of Elastin (ELN) from Homo sapiens (Human).